A 641-amino-acid chain; its full sequence is Threonine--tRNA ligase (641 aa).

Residues 1–61 enclose the TGS domain; sequence MPAITLPDGS…DDDVQLEIVT (61 aa). The segment at 242–533 is catalytic; the sequence is DHRRIGRAQN…LIEHYAGALP (292 aa). Positions 333, 384, and 510 each coordinate Zn(2+).

The protein belongs to the class-II aminoacyl-tRNA synthetase family. As to quaternary structure, homodimer. Requires Zn(2+) as cofactor.

It localises to the cytoplasm. It carries out the reaction tRNA(Thr) + L-threonine + ATP = L-threonyl-tRNA(Thr) + AMP + diphosphate + H(+). Its function is as follows. Catalyzes the attachment of threonine to tRNA(Thr) in a two-step reaction: L-threonine is first activated by ATP to form Thr-AMP and then transferred to the acceptor end of tRNA(Thr). Also edits incorrectly charged L-seryl-tRNA(Thr). In Alkalilimnicola ehrlichii (strain ATCC BAA-1101 / DSM 17681 / MLHE-1), this protein is Threonine--tRNA ligase.